Reading from the N-terminus, the 170-residue chain is Acetyl-CoA decarbonylase/synthase complex subunit epsilon 1 (170 aa).

It belongs to the CdhB family. As to quaternary structure, heterotetramer of two alpha and two epsilon subunits. The ACDS complex is made up of alpha, epsilon, beta, gamma and delta subunits with a probable stoichiometry of (alpha(2)epsilon(2))(4)-beta(8)-(gamma(1)delta(1))(8).

It participates in one-carbon metabolism; methanogenesis from acetate. Its function is as follows. Part of a complex that catalyzes the reversible cleavage of acetyl-CoA, allowing growth on acetate as sole source of carbon and energy. The alpha-epsilon subcomponent functions as a carbon monoxide dehydrogenase. The precise role of the epsilon subunit is unclear; it may have a stabilizing role within the alpha(2)epsilon(2) component and/or be involved in electron transfer to FAD during a potential FAD-mediated CO oxidation. This chain is Acetyl-CoA decarbonylase/synthase complex subunit epsilon 1 (cdhB1), found in Methanosarcina mazei (strain ATCC BAA-159 / DSM 3647 / Goe1 / Go1 / JCM 11833 / OCM 88) (Methanosarcina frisia).